The following is an 86-amino-acid chain: MQNEAGETVDVYIPRKCSASGRIIGARDYAAVQLNIADVDEKTGRVTGGFKTYAVSGFIRAMGESDDCLHRICTRDGICAGEQPQS.

It belongs to the eukaryotic ribosomal protein eS21 family. Component of the 40S small ribosomal subunit.

It localises to the cytoplasm. Its subcellular location is the cytosol. The protein resides in the rough endoplasmic reticulum. The protein is Small ribosomal subunit protein eS21 (RPS21) of Suberites domuncula (Sponge).